The chain runs to 582 residues: Glutaredoxin domain-containing cysteine-rich protein CG12206 (582 aa).

Polar residues predominate over residues 217 to 227 (CETLDSGTGSD). 2 disordered regions span residues 217-244 (CETL…VRSP) and 260-300 (EADH…SCDS). The span at 291–300 (SSNSSLSCDS) shows a compositional bias: low complexity. The 106-residue stretch at 423–528 (NVKNYMEKDV…QLLRPYKSIA (106 aa)) folds into the Glutaredoxin domain.

Belongs to the GRXCR1 family.

This chain is Glutaredoxin domain-containing cysteine-rich protein CG12206, found in Drosophila melanogaster (Fruit fly).